A 158-amino-acid polypeptide reads, in one-letter code: Endoribonuclease YbeY (158 aa).

Zn(2+) contacts are provided by H119, H123, and H129.

This sequence belongs to the endoribonuclease YbeY family. The cofactor is Zn(2+).

Its subcellular location is the cytoplasm. Its function is as follows. Single strand-specific metallo-endoribonuclease involved in late-stage 70S ribosome quality control and in maturation of the 3' terminus of the 16S rRNA. The polypeptide is Endoribonuclease YbeY (Shewanella sediminis (strain HAW-EB3)).